Reading from the N-terminus, the 506-residue chain is Histidine--tRNA ligase, mitochondrial (506 aa).

A mitochondrion-targeting transit peptide spans 1-33 (MPQLGLLPGRAWTVLLGLLRPPPGALCIRAVRS). S67 is modified (phosphoserine). L-histidine-binding positions include 131 to 133 (DLT), R158, Q174, D178, R327, and 331 to 332 (YY). An N6-acetyllysine modification is found at K444.

Belongs to the class-II aminoacyl-tRNA synthetase family. Homodimer.

The protein resides in the mitochondrion. The enzyme catalyses tRNA(His) + L-histidine + ATP = L-histidyl-tRNA(His) + AMP + diphosphate + H(+). Functionally, mitochondrial aminoacyl-tRNA synthetase that catalyzes the ATP-dependent ligation of histidine to the 3'-end of its cognate tRNA, via the formation of an aminoacyl-adenylate intermediate (His-AMP). This is Histidine--tRNA ligase, mitochondrial (HARS2) from Bos taurus (Bovine).